A 165-amino-acid chain; its full sequence is Small ribosomal subunit protein uS13 (165 aa).

The segment at 139–165 (GMTIGVARKKAAQPQSQQSSSQQQKSS) is disordered. Positions 153–165 (QSQQSSSQQQKSS) are enriched in low complexity.

The protein belongs to the universal ribosomal protein uS13 family. Part of the 30S ribosomal subunit. Forms a loose heterodimer with protein S19. Forms two bridges to the 50S subunit in the 70S ribosome.

Located at the top of the head of the 30S subunit, it contacts several helices of the 16S rRNA. In the 70S ribosome it contacts the 23S rRNA (bridge B1a) and protein L5 of the 50S subunit (bridge B1b), connecting the 2 subunits; these bridges are implicated in subunit movement. This Saccharolobus solfataricus (strain ATCC 35092 / DSM 1617 / JCM 11322 / P2) (Sulfolobus solfataricus) protein is Small ribosomal subunit protein uS13.